A 457-amino-acid polypeptide reads, in one-letter code: Multidrug resistance protein MdtK (457 aa).

12 helical membrane-spanning segments follow: residues 11–31, 53–73, 93–113, 127–147, 160–180, 188–208, 243–263, 276–296, 316–336, 357–377, 387–407, and 416–436; these read LLALGIPVIIAQFSQTAMGVV, IWLPTILLGQGILMALTPIVA, WLATFLSIMVIAILYNSRFII, AIGFIHAIMWGAPGCLYYQVL, GMIIGFIGLLINIPVNYAFIY, LGGIGCGVATASVFWAMFLMM, LPVGLALFFEVTLFAVVALLV, IALNFSSLMFMFPLSLGIAAT, ITALAVGLMLASCTAIFSIIF, LMLFAALYQLSDSVQVIGSGV, IFFITFIAYWVIGLPSGYLLG, and MGPAGFWIGFILGLTASAIMM.

It belongs to the multi antimicrobial extrusion (MATE) (TC 2.A.66.1) family. MdtK subfamily.

It is found in the cell inner membrane. Functionally, multidrug efflux pump that functions probably as a Na(+)/drug antiporter. The chain is Multidrug resistance protein MdtK from Proteus mirabilis (strain HI4320).